We begin with the raw amino-acid sequence, 344 residues long: Phenylalanine--tRNA ligase alpha subunit (344 aa).

Residue Glu-256 coordinates Mg(2+).

The protein belongs to the class-II aminoacyl-tRNA synthetase family. Phe-tRNA synthetase alpha subunit type 1 subfamily. Tetramer of two alpha and two beta subunits. Requires Mg(2+) as cofactor.

Its subcellular location is the cytoplasm. It carries out the reaction tRNA(Phe) + L-phenylalanine + ATP = L-phenylalanyl-tRNA(Phe) + AMP + diphosphate + H(+). The polypeptide is Phenylalanine--tRNA ligase alpha subunit (Onion yellows phytoplasma (strain OY-M)).